Reading from the N-terminus, the 393-residue chain is S-adenosylmethionine synthase 2 (393 aa).

A Mg(2+)-binding site is contributed by Glu-9. His-15 is a binding site for ATP. Residue Glu-43 coordinates K(+). L-methionine contacts are provided by Glu-56 and Gln-99. ATP-binding positions include 167–169 (DGK), 235–238 (SGRF), Asp-246, 252–253 (RK), Ala-269, Lys-273, and Lys-277. An L-methionine-binding site is contributed by Asp-246. An L-methionine-binding site is contributed by Lys-277.

The protein belongs to the AdoMet synthase family. Homotetramer. Mn(2+) serves as cofactor. Requires Mg(2+) as cofactor. It depends on Co(2+) as a cofactor. The cofactor is K(+).

It is found in the cytoplasm. The catalysed reaction is L-methionine + ATP + H2O = S-adenosyl-L-methionine + phosphate + diphosphate. The protein operates within amino-acid biosynthesis; S-adenosyl-L-methionine biosynthesis; S-adenosyl-L-methionine from L-methionine: step 1/1. In terms of biological role, catalyzes the formation of S-adenosylmethionine from methionine and ATP. The reaction comprises two steps that are both catalyzed by the same enzyme: formation of S-adenosylmethionine (AdoMet) and triphosphate, and subsequent hydrolysis of the triphosphate. The sequence is that of S-adenosylmethionine synthase 2 (METK2) from Populus trichocarpa (Western balsam poplar).